Here is a 2357-residue protein sequence, read N- to C-terminus: Protein transport protein Sec16A (2357 aa).

2 disordered regions span residues 1–25 and 57–303; these read MQPP…RSVF and FSRQ…STFR. Composition is skewed to low complexity over residues 64 to 76 and 210 to 227; these read STPL…SSPP and QMPG…PSGQ. A compositionally biased stretch (polar residues) spans 285-303; sequence HLQSGSHLANNSDPESTFR. Residues Ser296, Ser314, and Ser331 each carry the phosphoserine modification. 7 disordered regions span residues 335-359, 508-540, 553-603, 758-828, 924-987, 1006-1038, and 1059-1151; these read NPLA…GSGC, APDA…ARPQ, KPED…TGIF, VQPP…NPPV, LLVQ…SSHQ, VNVY…PNLD, and QELV…APGP. Positions 520–536 are enriched in low complexity; the sequence is SVSSSYSSRSHGRLSGS. Phosphoserine is present on residues Ser559, Ser569, Ser587, Ser589, and Ser592. Thr593 carries the post-translational modification Phosphothreonine. A Phosphoserine modification is found at Ser595. Polar residues-rich tracts occupy residues 766 to 778 and 803 to 825; these read SGQQ…SAAP and LQSQ…SLQN. A compositionally biased stretch (polar residues) spans 1006-1028; the sequence is VNVYNPSHSDSLASQQSVASHPR. The interval 1019-1890 is required for localization to endoplasmic reticulum exit sites; sequence SQQSVASHPR…QQVERQIKEG (872 aa). Ser1069 bears the Phosphoserine mark. A compositionally biased stretch (polar residues) spans 1080-1101; that stretch reads ELSNPESLPAQGQAQNSAQSPA. Positions 1101 to 1400 are interaction with MIA3; it reads ASLVLVDAGQ…EAPLPPGSFH (300 aa). The interval 1102-1405 is required for endoplasmic reticulum localization; it reads SLVLVDAGQQ…PGSFHGDFAY (304 aa). A compositionally biased stretch (low complexity) spans 1118–1131; sequence QSSSVSLVSSGSGQ. Residues 1138–1151 show a composition bias toward pro residues; the sequence is QPWPQPVPALAPGP. Phosphoserine is present on residues Ser1207, Ser1229, and Ser1305. The interval 1215-1248 is disordered; the sequence is YPEPERPSSRASHSSERPPPRQGYPEGYYSSKSG. Over residues 1216–1233 the composition is skewed to basic and acidic residues; sequence PEPERPSSRASHSSERPP. A compositionally biased stretch (basic and acidic residues) spans 1307-1322; the sequence is FGDRPEKRDNNWRYDP. Residues 1307–1378 form a disordered region; the sequence is FGDRPEKRDN…SLSSHSHQSQ (72 aa). Thr1325 carries the phosphothreonine modification. Phosphoserine is present on residues Ser1327, Ser1347, Ser1350, Ser1356, Ser1359, Ser1362, Ser1369, Ser1573, and Ser1601. A compositionally biased stretch (basic and acidic residues) spans 1333–1354; it reads DPHRDPYGEEVDRRSVHSEHSA. The span at 1356–1375 shows a compositional bias: low complexity; it reads SLHSAHSLASRRSSLSSHSH. Residues 1434-1890 form a central conserved domain (CCD); mediates interaction with RNF183, LRRK2 and SEC13 region; the sequence is QVSSRPTSPE…QQVERQIKEG (457 aa). Thr1907 carries the post-translational modification Phosphothreonine. Residues Ser1939, Ser1964, Ser2022, and Ser2042 each carry the phosphoserine modification. 3 disordered regions span residues 2049 to 2110, 2141 to 2181, and 2226 to 2328; these read KFAN…SWFF, VNLN…PVNM, and NLFV…MPFY. Thr2054 bears the Phosphothreonine mark. Ser2056, Ser2073, and Ser2083 each carry phosphoserine. Residues 2087–2106 are compositionally biased toward basic and acidic residues; sequence ETKRPGQAAKKETKEPKKGE. The required for interaction with SEC23A stretch occupies residues 2106-2357; the sequence is ESWFFRWLPG…IGQRKHLVLN (252 aa). Residues Ser2271 and Ser2291 each carry the phosphoserine modification. Composition is skewed to low complexity over residues 2289–2302 and 2310–2324; these read ELSR…LSRE and APGD…PSGA.

The protein belongs to the SEC16 family. In terms of assembly, SEC16A and SEC16B are each present in multiple copies in a heteromeric complex. Interacts with SEC23A. Interacts with RNF183 and RNF152. Interacts with LRRK2 (via ROC domain). Interacts with SEC13. Interacts with RAB10. Interacts with MIA3. Interacts with GORASP2 in response to ER stress. In terms of tissue distribution, ubiquitous. Expressed at higher levels in the pancreas.

Its subcellular location is the endoplasmic reticulum membrane. The protein resides in the golgi apparatus membrane. The protein localises to the cytoplasm. It localises to the perinuclear region. It is found in the cytosol. Its subcellular location is the microsome membrane. Acts as a molecular scaffold that plays a key role in the organization of the endoplasmic reticulum exit sites (ERES), also known as transitional endoplasmic reticulum (tER). SAR1A-GTP-dependent assembly of SEC16A on the ER membrane forms an organized scaffold defining an ERES. Required for secretory cargo traffic from the endoplasmic reticulum to the Golgi apparatus. Mediates the recruitment of MIA3/TANGO to ERES. Regulates both conventional (ER/Golgi-dependent) and GORASP2-mediated unconventional (ER/Golgi-independent) trafficking of CFTR to cell membrane. Positively regulates the protein stability of E3 ubiquitin-protein ligases RNF152 and RNF183 and the ER localization of RNF183. Acts as a RAB10 effector in the regulation of insulin-induced SLC2A4/GLUT4 glucose transporter-enriched vesicles delivery to the cell membrane in adipocytes. The sequence is that of Protein transport protein Sec16A (SEC16A) from Homo sapiens (Human).